The following is a 175-amino-acid chain: MWSFARYTQKFCLRNLQLKNFSNKVKVSSLLFCSPNVRNISNWQCKRFTQSDAKDLASGVPSVKSDADQLQPKPTYNVSFTCTVCNTRSNHNFSKQAYHNGTVLVQCPKCKNRHLMADHLKIFSEERVTIEDILAKKGETFKKGYGQVINGNVVEFKPPQFKIRPAKSSSSNSSK.

The segment at 71–166 adopts a DNL-type zinc-finger fold; the sequence is QPKPTYNVSF…KPPQFKIRPA (96 aa). Positions 82, 85, 107, and 110 each coordinate Zn(2+).

This is an uncharacterized protein from Schizosaccharomyces pombe (strain 972 / ATCC 24843) (Fission yeast).